The sequence spans 436 residues: Trigger factor (436 aa).

Positions 161-246 constitute a PPIase FKBP-type domain; it reads EDQLNIDFVG…VNTVSEPKLP (86 aa).

This sequence belongs to the FKBP-type PPIase family. Tig subfamily.

It is found in the cytoplasm. It catalyses the reaction [protein]-peptidylproline (omega=180) = [protein]-peptidylproline (omega=0). Involved in protein export. Acts as a chaperone by maintaining the newly synthesized protein in an open conformation. Functions as a peptidyl-prolyl cis-trans isomerase. This is Trigger factor from Pseudomonas fluorescens (strain Pf0-1).